Consider the following 128-residue polypeptide: MRFAIVVTGPAYGTQQASSAFQFAQALIAEGHKLSSVFFYREGVYNANQLTSPASDEFDLVRGWQQLNAQHGVALNICVAAALRRGIVDETEAGRLGLASSNLQPGFTLSGLGALAEASLTCDRVVQF.

Cysteine 78 acts as the Cysteine persulfide intermediate in catalysis.

The protein belongs to the DsrE/TusD family. Heterohexamer, formed by a dimer of trimers. The hexameric TusBCD complex contains 2 copies each of TusB, TusC and TusD. The TusBCD complex interacts with TusE.

It is found in the cytoplasm. Part of a sulfur-relay system required for 2-thiolation of 5-methylaminomethyl-2-thiouridine (mnm(5)s(2)U) at tRNA wobble positions. Accepts sulfur from TusA and transfers it in turn to TusE. The polypeptide is Sulfurtransferase TusD (Shigella flexneri serotype 5b (strain 8401)).